The chain runs to 787 residues: MQFSYSWLKTQADTELSSDKLEHLLTMSGLEVEEAETAAPAFAGVVIAEVKSVEKHPDADRLNVTRVDAGTGGLVQIVCGAPNVKAGIKVPCSLPGAVLPGNFKIKPTKMRGEVSDGMLCSTDELGLPDDGVNGLHILPEDAPVGTNIREYLDLDDTLFTLKITPNRADCLSIKGIAREVSALTGCAFRQPEIHTAPITGSRKQPVQINAPADCGRFISRVIENVNARATTPDWMKQRLERSGIRSISALVDIGNYVMLEIGQPMHVFDADKLSGSLHIRRAREGETLECLNEKTVSLSENTLVVADEKGVLSLAGLMGGAASAVSDGTQNIVLEAAWFAPEIIAGKSRQYGFGSDSSFRFERGVDYRLQADAIERATELVLQICGGAAGEMVEAQGELPEAKQVGLRLDRLKTVLGVDIPAEQVETILQHLGLQPEKTAEGFRVTAPSFRFDIEIEADLIEEIGRVYGYENIPDDYTSGRLKMLELPETRRPRFAVYNEMAARGYREVVSYAFVDEQWEQDFAANADPIRLQNPLAAQYAVMRSTLIGGLVEILQNNLNRKQNRVCVFEIARVFSKGSDGQFVQNERIGGLWYGAVMPEQWGGKTRNADFYDIKADVENLLKNKAVEFVKTGHPALHPGRAANIVSDGKVIGFVGELHPKWLQKYDLPQAPLVFEIDMAAVLECGKTRYRVVSKFQPVRRDLAFVMPEAMSHDDLLLVLKGAANKLVQEISVFDVYRGTGLPEGMKSVAVKVILQDMENTLTDEAVEPLIGKLIGAATAAGARLRS.

The tRNA-binding domain occupies 39 to 149 (APAFAGVVIA…EDAPVGTNIR (111 aa)). Positions 400–475 (PEAKQVGLRL…RVYGYENIPD (76 aa)) constitute a B5 domain. The Mg(2+) site is built by D453, D459, E462, and E463. One can recognise an FDX-ACB domain in the interval 694 to 786 (SKFQPVRRDL…AATAAGARLR (93 aa)).

Belongs to the phenylalanyl-tRNA synthetase beta subunit family. Type 1 subfamily. As to quaternary structure, tetramer of two alpha and two beta subunits. It depends on Mg(2+) as a cofactor.

It is found in the cytoplasm. The catalysed reaction is tRNA(Phe) + L-phenylalanine + ATP = L-phenylalanyl-tRNA(Phe) + AMP + diphosphate + H(+). The polypeptide is Phenylalanine--tRNA ligase beta subunit (pheT) (Neisseria meningitidis serogroup B (strain ATCC BAA-335 / MC58)).